Here is a 143-residue protein sequence, read N- to C-terminus: Root meristem growth factor 10 (143 aa).

Residues methionine 1–serine 27 form the signal peptide. A propeptide spanning residues arginine 28–leucine 130 is cleaved from the precursor. N-linked (GlcNAc...) asparagine glycosylation occurs at asparagine 60. The span at asparagine 74–glycine 83 shows a compositional bias: polar residues. The disordered stretch occupies residues asparagine 74–asparagine 143. A Nuclear localization signal motif is present at residues valine 92–lysine 99. Tyrosine 132 carries the post-translational modification Sulfotyrosine. Proline 140 carries the post-translational modification Hydroxyproline.

This sequence belongs to the RGF family. As to quaternary structure, binds to LRR receptor-like serine/threonine-protein kinases RGI1, RGI2 and RGI3 to trigger their dimerization with SERK proteins and subsequent signaling. Post-translationally, the tyrosine sulfation is critical for the function of the peptide. Expressed in root tips.

It is found in the secreted. The protein resides in the nucleus. Its function is as follows. Maintains the postembryonic root stem cell niche by regulating the expression levels and patterns of the transcription factor PLETHORA (PLT), mainly at the post-transcriptional level. Promotes root elongation. The protein is Root meristem growth factor 10 of Arabidopsis thaliana (Mouse-ear cress).